A 514-amino-acid chain; its full sequence is 2,3-bisphosphoglycerate-independent phosphoglycerate mutase (514 aa).

2 residues coordinate Mn(2+): Asp-13 and Ser-63. The active-site Phosphoserine intermediate is Ser-63. Residues His-124, 154–155 (RD), Arg-186, Arg-192, 258–261 (RADR), and Lys-332 contribute to the substrate site. Mn(2+) contacts are provided by Asp-399, His-403, Asp-440, His-441, and His-459.

It belongs to the BPG-independent phosphoglycerate mutase family. As to quaternary structure, monomer. The cofactor is Mn(2+).

The enzyme catalyses (2R)-2-phosphoglycerate = (2R)-3-phosphoglycerate. Its pathway is carbohydrate degradation; glycolysis; pyruvate from D-glyceraldehyde 3-phosphate: step 3/5. Catalyzes the interconversion of 2-phosphoglycerate and 3-phosphoglycerate. The protein is 2,3-bisphosphoglycerate-independent phosphoglycerate mutase of Legionella pneumophila (strain Lens).